The primary structure comprises 297 residues: Phosphoribosylaminoimidazole-succinocarboxamide synthase (297 aa).

Belongs to the SAICAR synthetase family.

It catalyses the reaction 5-amino-1-(5-phospho-D-ribosyl)imidazole-4-carboxylate + L-aspartate + ATP = (2S)-2-[5-amino-1-(5-phospho-beta-D-ribosyl)imidazole-4-carboxamido]succinate + ADP + phosphate + 2 H(+). Its pathway is purine metabolism; IMP biosynthesis via de novo pathway; 5-amino-1-(5-phospho-D-ribosyl)imidazole-4-carboxamide from 5-amino-1-(5-phospho-D-ribosyl)imidazole-4-carboxylate: step 1/2. The chain is Phosphoribosylaminoimidazole-succinocarboxamide synthase from Corynebacterium diphtheriae (strain ATCC 700971 / NCTC 13129 / Biotype gravis).